The chain runs to 71 residues: UPF0346 protein SPG_0874 (71 aa).

The protein belongs to the UPF0346 family.

The protein is UPF0346 protein SPG_0874 of Streptococcus pneumoniae serotype 19F (strain G54).